A 323-amino-acid chain; its full sequence is MHILQACKGMEHRSISSLIVNQKRQFLLTATATLVGSMIMNENNRLANKMEKGQLHYKDANAIFNKALEAQESKYFSRSKSNYPGHVPLFTFEKLLMIAGSSLGAYLHPERNEFIVALGESTAITPVLTKLQTQMLSDPVGRQILRERPRITSTSLDLDKLRELPDNTIGKTYVNWLDREGVSPDTRVPVKYIDDEELAYIYQRYRECHDFYHSITGLPIIIEGEIAVKILEFMNIGIPMSGLGALFAPLRLKPSQKERLYNIYYPWGFKSGLNSKPLINVYWENILEEDINEFRHKMGIEQPPDLRNLRKKYFEELKKKKKV.

Zn(2+) contacts are provided by His-209, Asp-210, His-213, and Glu-225.

This sequence belongs to the COQ4 family. In terms of assembly, component of a multi-subunit COQ enzyme complex, composed of at least COQ3, COQ4, COQ5, COQ6, COQ7 and COQ9. Zn(2+) serves as cofactor.

It localises to the mitochondrion inner membrane. The enzyme catalyses a 4-hydroxy-3-methoxy-5-(all-trans-polyprenyl)benzoate + H(+) = a 2-methoxy-6-(all-trans-polyprenyl)phenol + CO2. Its pathway is cofactor biosynthesis; ubiquinone biosynthesis. Its function is as follows. Lyase that catalyzes the C1-decarboxylation of 4-hydroxy-3-methoxy-5-(all-trans-polyprenyl)benzoic acid into 2-methoxy-6-(all-trans-polyprenyl)phenol during ubiquinone biosynthesis. The chain is Ubiquinone biosynthesis protein COQ4, mitochondrial from Debaryomyces hansenii (strain ATCC 36239 / CBS 767 / BCRC 21394 / JCM 1990 / NBRC 0083 / IGC 2968) (Yeast).